A 67-amino-acid chain; its full sequence is UPF0434 protein Tcr_0959 (67 aa).

Belongs to the UPF0434 family.

This Hydrogenovibrio crunogenus (strain DSM 25203 / XCL-2) (Thiomicrospira crunogena) protein is UPF0434 protein Tcr_0959.